Reading from the N-terminus, the 467-residue chain is Asparagine--tRNA ligase (467 aa).

It belongs to the class-II aminoacyl-tRNA synthetase family. Homodimer.

It localises to the cytoplasm. The enzyme catalyses tRNA(Asn) + L-asparagine + ATP = L-asparaginyl-tRNA(Asn) + AMP + diphosphate + H(+). This is Asparagine--tRNA ligase from Actinobacillus pleuropneumoniae serotype 5b (strain L20).